An 82-amino-acid polypeptide reads, in one-letter code: ATP synthase subunit c, chloroplastic (82 aa).

Transmembrane regions (helical) follow at residues 3–23 and 57–77; these read PIVA…AAIG and FAFM…LLFA.

This sequence belongs to the ATPase C chain family. F-type ATPases have 2 components, F(1) - the catalytic core - and F(0) - the membrane proton channel. F(1) has five subunits: alpha(3), beta(3), gamma(1), delta(1), epsilon(1). F(0) has four main subunits: a(1), b(1), b'(1) and c(10-14). The alpha and beta chains form an alternating ring which encloses part of the gamma chain. F(1) is attached to F(0) by a central stalk formed by the gamma and epsilon chains, while a peripheral stalk is formed by the delta, b and b' chains.

The protein localises to the plastid. It localises to the chloroplast thylakoid membrane. In terms of biological role, f(1)F(0) ATP synthase produces ATP from ADP in the presence of a proton or sodium gradient. F-type ATPases consist of two structural domains, F(1) containing the extramembraneous catalytic core and F(0) containing the membrane proton channel, linked together by a central stalk and a peripheral stalk. During catalysis, ATP synthesis in the catalytic domain of F(1) is coupled via a rotary mechanism of the central stalk subunits to proton translocation. Its function is as follows. Key component of the F(0) channel; it plays a direct role in translocation across the membrane. A homomeric c-ring of between 10-14 subunits forms the central stalk rotor element with the F(1) delta and epsilon subunits. In Tetradesmus obliquus (Green alga), this protein is ATP synthase subunit c, chloroplastic.